The following is a 687-amino-acid chain: Putative mitochondrial carnitine O-acetyltransferase (687 aa).

The active-site Proton acceptor is the H346. 446–459 (GASHIKTVFKCSPD) contributes to the CoA binding site. Residues Y481 and T494 each coordinate (R)-carnitine. The residue at position 517 (S517) is a Phosphoserine.

This sequence belongs to the carnitine/choline acetyltransferase family.

The protein localises to the mitochondrion inner membrane. The catalysed reaction is (R)-carnitine + acetyl-CoA = O-acetyl-(R)-carnitine + CoA. In terms of biological role, involved in the transfer of acetyl-CoA into mitochondria. May also be involved in the metabolism of acetate and of ethanol. This Saccharomyces cerevisiae (strain ATCC 204508 / S288c) (Baker's yeast) protein is Putative mitochondrial carnitine O-acetyltransferase (YAT1).